Here is a 546-residue protein sequence, read N- to C-terminus: Low-affinity methionine permease (546 aa).

Residues 1–70 (MEPLLFNSGK…QGRHLGVFST (70 aa)) lie on the Extracellular side of the membrane. A helical transmembrane segment spans residues 71-91 (VVLFVSRIMGSGIFAVPSVIL). Topologically, residues 92–98 (LNTGGNK) are cytoplasmic. A helical transmembrane segment spans residues 99-119 (LIYFAIWVFSAAIAFAGLYLF). At 120 to 148 (LEFGSWIPKSGGRKNFLERSFERPRLLIS) the chain is on the extracellular side. A helical membrane pass occupies residues 149 to 169 (VVFSCYSVLTGYALTGSIVFG). Residues 170-188 (KYVLSAFGVTDDSWSKYVS) lie on the Cytoplasmic side of the membrane. A helical transmembrane segment spans residues 189–209 (ISFIIFAVLIHGVSVRHGVFI). Residues 210–213 (QNAL) lie on the Extracellular side of the membrane. The chain crosses the membrane as a helical span at residues 214–234 (GGLKLIMIVLMCFAGLYTLFF). Residues 235 to 254 (YKSTGQVAWDLPVTQVEKDS) are Cytoplasmic-facing. The helical transmembrane segment at 255-275 (LLSVSSIATAFISSFFCFSGW) threads the bilayer. The Extracellular segment spans residues 276–297 (DTVHTVTSEIKNPVKTLKVSGP). A helical membrane pass occupies residues 298-318 (LSLIICFVCYTMMNVAYLKVL). Position 319 (threonine 319) is a topological domain, cytoplasmic. The helical transmembrane segment at 320-340 (YEEIVSAGPLVGSVLFTKLFG) threads the bilayer. Residues 341–346 (PRVGGK) are Extracellular-facing. A helical membrane pass occupies residues 347–367 (FIAFSIAISAASNILVVIYSI). Topologically, residues 368 to 393 (SRVNQEIFKEGYLPFSIHMSKNWPFD) are cytoplasmic. The helical transmembrane segment at 394-414 (APLPSISLCGFITIAWILILP) threads the bilayer. The Extracellular segment spans residues 415-423 (KEGESFNYL). Residues 424–444 (VSMDGYGNQFFLLLVAIGLFI) form a helical membrane-spanning segment. Over 445 to 459 (WRFKHKNEVPEIRAS) the chain is Cytoplasmic. A helical membrane pass occupies residues 460–480 (TFGVLAIITLSLYMLMAPFFA). Over 481-494 (DPSLNRVGFLPPYQ) the chain is Extracellular. A helical transmembrane segment spans residues 495–515 (IMSLLVIVACFFFWLVKFVLL). The Cytoplasmic portion of the chain corresponds to 516 to 546 (PKFFHYKLLPKITYLHDGLIVTEWVKKPCLC).

It to yeast high affinity methionine permease (MUP1).

Its subcellular location is the membrane. Its function is as follows. Very low affinity permease for methionine. The chain is Low-affinity methionine permease (MUP3) from Saccharomyces cerevisiae (strain ATCC 204508 / S288c) (Baker's yeast).